The primary structure comprises 221 residues: UPF0758 protein YicR (221 aa).

In terms of domain architecture, MPN spans 99–221 (ALLSPEMTRE…YVSFAERGWI (123 aa)). His170, His172, and Asp183 together coordinate Zn(2+). The JAMM motif signature appears at 170–183 (HNHPSGCAEPSKAD).

This sequence belongs to the UPF0758 family. YicR subfamily.

The sequence is that of UPF0758 protein YicR from Salmonella newport (strain SL254).